Consider the following 432-residue polypeptide: Teosinte glume architecture 1 (432 aa).

2 disordered regions span residues 20-55 (HAAA…GAPA) and 68-102 (ECEP…QQQC). A compositionally biased stretch (low complexity) spans 22–41 (AAAPSSGGHAANAAAAGTGT). Residues 102–179 (CPSCAVDGCR…DGHNRRRRKP (78 aa)) form an SBP-type zinc finger. The Zn(2+) site is built by Cys-105, Cys-110, Cys-127, His-130, Cys-146, Cys-149, His-153, and Cys-165. Residues 409-420 (GGGSGGGEGSSD) are compositionally biased toward gly residues. Positions 409-432 (GGGSGGGEGSSDGGTSSSMPFSWQ) are disordered.

In terms of assembly, monomer and homodimer. Strongly expressed in immature ears and weakly in husks. Found in the inflorescence meristem of the developing ear, in the spikelet pair primordia, the glume primordia, the cupule forming region and other floral organs. Not detected in other tissues.

In terms of biological role, SBP transcriptional regulator probably involved in the domestication of maize. Acts as a transcriptional repressor binding to a 5'-GTAC-3' motif. May repress the growth of lateral branches in length and numbers. The protein is Teosinte glume architecture 1 of Zea mays (Maize).